The following is a 335-amino-acid chain: Holliday junction branch migration complex subunit RuvB (335 aa).

The tract at residues 1–181 is large ATPase domain (RuvB-L); the sequence is MERIVEVEKF…FGMHFRLQFY (181 aa). ATP-binding positions include Leu20, Arg21, Gly62, Lys65, Thr66, Thr67, 128-130, Arg171, Tyr181, and Arg218; that span reads EDF. Thr66 contributes to the Mg(2+) binding site. The tract at residues 182–252 is small ATPAse domain (RuvB-S); it reads TPQELAQIIT…RTQKALEALG (71 aa). Positions 255 to 335 are head domain (RuvB-H); sequence ERGFDELDLK…LTPNIQNSLF (81 aa). Positions 309 and 314 each coordinate DNA.

It belongs to the RuvB family. In terms of assembly, homohexamer. Forms an RuvA(8)-RuvB(12)-Holliday junction (HJ) complex. HJ DNA is sandwiched between 2 RuvA tetramers; dsDNA enters through RuvA and exits via RuvB. An RuvB hexamer assembles on each DNA strand where it exits the tetramer. Each RuvB hexamer is contacted by two RuvA subunits (via domain III) on 2 adjacent RuvB subunits; this complex drives branch migration. In the full resolvosome a probable DNA-RuvA(4)-RuvB(12)-RuvC(2) complex forms which resolves the HJ.

The protein localises to the cytoplasm. It catalyses the reaction ATP + H2O = ADP + phosphate + H(+). The RuvA-RuvB-RuvC complex processes Holliday junction (HJ) DNA during genetic recombination and DNA repair, while the RuvA-RuvB complex plays an important role in the rescue of blocked DNA replication forks via replication fork reversal (RFR). RuvA specifically binds to HJ cruciform DNA, conferring on it an open structure. The RuvB hexamer acts as an ATP-dependent pump, pulling dsDNA into and through the RuvAB complex. RuvB forms 2 homohexamers on either side of HJ DNA bound by 1 or 2 RuvA tetramers; 4 subunits per hexamer contact DNA at a time. Coordinated motions by a converter formed by DNA-disengaged RuvB subunits stimulates ATP hydrolysis and nucleotide exchange. Immobilization of the converter enables RuvB to convert the ATP-contained energy into a lever motion, pulling 2 nucleotides of DNA out of the RuvA tetramer per ATP hydrolyzed, thus driving DNA branch migration. The RuvB motors rotate together with the DNA substrate, which together with the progressing nucleotide cycle form the mechanistic basis for DNA recombination by continuous HJ branch migration. Branch migration allows RuvC to scan DNA until it finds its consensus sequence, where it cleaves and resolves cruciform DNA. The chain is Holliday junction branch migration complex subunit RuvB from Nitratiruptor sp. (strain SB155-2).